A 687-amino-acid polypeptide reads, in one-letter code: Polyphosphate kinase (687 aa).

Asn45 is an ATP binding site. Mg(2+) contacts are provided by Arg375 and Arg405. The active-site Phosphohistidine intermediate is the His435. Residues Tyr472, Arg568, and His596 each coordinate ATP.

Belongs to the polyphosphate kinase 1 (PPK1) family. Mg(2+) serves as cofactor. Post-translationally, an intermediate of this reaction is the autophosphorylated ppk in which a phosphate is covalently linked to a histidine residue through a N-P bond.

The enzyme catalyses [phosphate](n) + ATP = [phosphate](n+1) + ADP. Catalyzes the reversible transfer of the terminal phosphate of ATP to form a long-chain polyphosphate (polyP). The polypeptide is Polyphosphate kinase (Burkholderia ambifaria (strain MC40-6)).